A 581-amino-acid chain; its full sequence is Sulfate adenylyltransferase (581 aa).

Positions 1 to 176 are N-terminal; sequence MANAPHGGVL…VQAIQAPTHF (176 aa). The tract at residues 177 to 401 is catalytic; sequence DYVPLRFTPA…LRESYPPRPQ (225 aa). Q204 is a sulfate binding site. Residues 204-207 and 298-301 each bind ATP; these read QTRN and GRDH. Active-site residues include T205, R206, and N207. R206 lines the sulfate pocket. Residue A302 coordinates sulfate. M340 serves as a coordination point for ATP. The allosteric regulation domain; adenylyl-sulfate kinase-like stretch occupies residues 402–581; sequence QGFTILLTGL…IMILESQNLV (180 aa). 3'-phosphoadenylyl sulfate contacts are provided by residues 441–444, 486–487, and R526; these read EELR and TA.

In the N-terminal section; belongs to the sulfate adenylyltransferase family. The protein in the C-terminal section; belongs to the APS kinase family. Homohexamer. Dimer of trimers.

Its subcellular location is the cytoplasm. It catalyses the reaction sulfate + ATP + H(+) = adenosine 5'-phosphosulfate + diphosphate. It participates in sulfur metabolism; hydrogen sulfide biosynthesis; sulfite from sulfate: step 1/3. Its activity is regulated as follows. Allosterically inhibited by 3'-phosphoadenosine 5'-phosphosulfate (PAPS). Its function is as follows. Catalyzes the first intracellular reaction of sulfate assimilation, forming adenosine-5'-phosphosulfate (APS) from inorganic sulfate and ATP. Plays an important role in sulfate activation as a component of the biosynthesis pathway of sulfur-containing amino acids. This chain is Sulfate adenylyltransferase, found in Cryptococcus neoformans var. neoformans serotype D (strain B-3501A) (Filobasidiella neoformans).